The sequence spans 242 residues: Venom nerve growth factor 2 (242 aa).

The N-terminal stretch at 1–18 is a signal peptide; sequence MSMLCYTLIIAFLIGIWA. Residues 19-125 constitute a propeptide that is removed on maturation; that stretch reads APKSEDNVPL…ALNRNIRSKR (107 aa). The disordered stretch occupies residues 46-69; it reads KALKTSRNTDQRHPAPKKAEDQEL. Over residues 52–66 the composition is skewed to basic and acidic residues; that stretch reads RNTDQRHPAPKKAED. 3 disulfide bridges follow: cysteine 139-cysteine 203, cysteine 181-cysteine 231, and cysteine 191-cysteine 233. The N-linked (GlcNAc...) asparagine glycan is linked to asparagine 147.

This sequence belongs to the NGF-beta family. As to quaternary structure, homodimer; non-covalently linked. As to expression, expressed by the venom gland.

It localises to the secreted. Functionally, nerve growth factor is important for the development and maintenance of the sympathetic and sensory nervous systems. It stimulates division and differentiation of sympathetic and embryonic sensory neurons as well as basal forebrain cholinergic neurons in the brain. Its relevance in the snake venom is not clear. However, it has been shown to inhibit metalloproteinase-dependent proteolysis of platelet glycoprotein Ib alpha, suggesting a metalloproteinase inhibition to prevent metalloprotease autodigestion and/or protection against prey proteases. Binds a lipid between the two protein chains in the homodimer. The lipid-bound form promotes histamine relase from mouse mast cells, contrary to the lipid-free form. The protein is Venom nerve growth factor 2 of Demansia vestigiata (Lesser black whip snake).